Consider the following 288-residue polypeptide: Protein sprouty homolog 3 (288 aa).

Residues 154–267 (KCVPCTAVRP…PGCRCKRHTN (114 aa)) form the SPR domain.

It belongs to the sprouty family. In terms of assembly, interacts with TESK1. Interacts with USP11. Interacts with CAV1 (via C-terminus). Expressed in the brain with expression the highest in Purkinje cell bodies and projections in the cerebellum (at protein level). Also expressed in central and peripheral nervous system ganglion cells, superior cervical ganglion and dorsal root ganglion (at protein level). Expressed in the retinal ganglion cell layer and the inner nuclear layer (at protein level).

The protein localises to the cytoplasm. Functionally, inhibits neurite branching, arbor length and neurite complexity. Inhibits EGF-mediated p42/44 ERK signaling. Negatively regulates the MAPK cascade, resulting in a reduction of extracellular matrix protein accumulation. May function as an antagonist of fibroblast growth factor (FGF) pathways and may negatively modulate respiratory organogenesis. The chain is Protein sprouty homolog 3 from Mus musculus (Mouse).